A 144-amino-acid chain; its full sequence is Leghemoglobin-1 (144 aa).

One can recognise a Globin domain in the interval G2–A144. Y25 and Y30 each carry nitrated tyrosine. Heme b is bound at residue S45. S45 is subject to Phosphoserine. H62 contacts O2. Heme b is bound by residues K65, H93, and K96. At Y134 the chain carries Nitrated tyrosine.

It belongs to the plant globin family. Monomer. Post-translationally, nitrated in effective nodules and particularly in hypoxic conditions; this mechanism may play a protective role in the symbiosis by buffering toxic peroxynitrite NO(2)(-). Nitration level decrease during nodule senescence. In terms of processing, phosphorylation at Ser-45 disrupts the molecular environment of its porphyrin ring oxygen binding pocket, thus leading to a reduced oxygen consumption and to the delivery of oxygen O(2) to symbiosomes. In terms of tissue distribution, root nodules.

It localises to the cytoplasm. The protein resides in the cytosol. Its subcellular location is the nucleus. In terms of biological role, leghemoglobin that reversibly binds oxygen O(2) through a pentacoordinated heme iron. In root nodules, facilitates the diffusion of oxygen to the bacteroids while preventing the bacterial nitrogenase from being inactivated by buffering dioxygen, nitric oxide and carbon monoxide, and promoting the formation of reactive oxygen species (ROS, e.g. H(2)O(2)). This role is essential for symbiotic nitrogen fixation (SNF). This Vicia faba (Broad bean) protein is Leghemoglobin-1.